The sequence spans 343 residues: tRNA-splicing endonuclease (343 aa).

Active-site residues include tyrosine 277, histidine 288, and lysine 319.

It belongs to the tRNA-intron endonuclease family. Archaeal long subfamily. As to quaternary structure, homodimer.

It catalyses the reaction pretRNA = a 3'-half-tRNA molecule with a 5'-OH end + a 5'-half-tRNA molecule with a 2',3'-cyclic phosphate end + an intron with a 2',3'-cyclic phosphate and a 5'-hydroxyl terminus.. Endonuclease that removes tRNA introns. Cleaves pre-tRNA at the 5' and 3' splice sites to release the intron. The products are an intron and two tRNA half-molecules bearing 2',3' cyclic phosphate and 5'-OH termini. Recognizes a pseudosymmetric substrate in which 2 bulged loops of 3 bases are separated by a stem of 4 bp. The polypeptide is tRNA-splicing endonuclease (Halobacterium salinarum (strain ATCC 29341 / DSM 671 / R1)).